The primary structure comprises 336 residues: Protein-glutamate methylesterase/protein-glutamine glutaminase 1 (336 aa).

A Response regulatory domain is found at 2–119; it reads KIAIVNDMPM…GNAQEAAAPL (118 aa). A 4-aspartylphosphate modification is found at aspartate 53. Positions 143–336 constitute a CheB-type methylesterase domain; that stretch reads PLRSGAPRQS…APRLLEIFAK (194 aa). Residues serine 159, histidine 186, and aspartate 279 contribute to the active site.

The protein belongs to the CheB family. In terms of processing, phosphorylated by CheA. Phosphorylation of the N-terminal regulatory domain activates the methylesterase activity.

It localises to the cytoplasm. It carries out the reaction [protein]-L-glutamate 5-O-methyl ester + H2O = L-glutamyl-[protein] + methanol + H(+). The enzyme catalyses L-glutaminyl-[protein] + H2O = L-glutamyl-[protein] + NH4(+). In terms of biological role, involved in chemotaxis. Part of a chemotaxis signal transduction system that modulates chemotaxis in response to various stimuli. Catalyzes the demethylation of specific methylglutamate residues introduced into the chemoreceptors (methyl-accepting chemotaxis proteins or MCP) by CheR. Also mediates the irreversible deamidation of specific glutamine residues to glutamic acid. This Pseudomonas fluorescens (strain ATCC BAA-477 / NRRL B-23932 / Pf-5) protein is Protein-glutamate methylesterase/protein-glutamine glutaminase 1.